A 460-amino-acid polypeptide reads, in one-letter code: T-box transcription factor TBX1 (460 aa).

Disordered regions lie at residues leucine 30–phenylalanine 53 and glycine 67–lysine 99. The segment covering glycine 67–cysteine 84 has biased composition (polar residues). The segment at residues leucine 116 to aspartate 294 is a DNA-binding region (T-box). 2 disordered regions span residues arginine 317–histidine 355 and proline 376–leucine 400. Polar residues predominate over residues asparagine 320–glycine 330. Positions threonine 331 to proline 344 are enriched in basic and acidic residues. A Nuclear localization signal motif is present at residues lysine 418–isoleucine 429.

As to quaternary structure, binds DNA as a dimer. Expressed in the ear and mesendodermal components of pharyngeal arches.

It localises to the nucleus. Its function is as follows. Probable transcriptional regulator involved in developmental processes. Binds to the palindromic T site 5'-TTCACACCTAGGTGTGAA-3' DNA sequence. Is required for normal development of the pharyngeal arch arteries. Acts cell autonomously in the pharyngeal mesendoderm and influences the development of neural crest-derived cartilages secondarily. This is T-box transcription factor TBX1 (tbx1) from Danio rerio (Zebrafish).